Consider the following 541-residue polypeptide: Light-independent protochlorophyllide reductase subunit B (541 aa).

[4Fe-4S] cluster is bound at residue aspartate 36. The active-site Proton donor is aspartate 287. Residue 422-423 (GL) participates in substrate binding.

Belongs to the ChlB/BchB/BchZ family. In terms of assembly, protochlorophyllide reductase is composed of three subunits; BchL, BchN and BchB. Forms a heterotetramer of two BchB and two BchN subunits. Requires [4Fe-4S] cluster as cofactor.

The catalysed reaction is chlorophyllide a + oxidized 2[4Fe-4S]-[ferredoxin] + 2 ADP + 2 phosphate = protochlorophyllide a + reduced 2[4Fe-4S]-[ferredoxin] + 2 ATP + 2 H2O. It functions in the pathway porphyrin-containing compound metabolism; bacteriochlorophyll biosynthesis (light-independent). Functionally, component of the dark-operative protochlorophyllide reductase (DPOR) that uses Mg-ATP and reduced ferredoxin to reduce ring D of protochlorophyllide (Pchlide) to form chlorophyllide a (Chlide). This reaction is light-independent. The NB-protein (BchN-BchB) is the catalytic component of the complex. This is Light-independent protochlorophyllide reductase subunit B from Rhodopseudomonas palustris (strain HaA2).